The sequence spans 570 residues: Urease subunit alpha (570 aa).

Positions 131 to 570 (GGMDSHIHFI…LPMAQRYFLF (440 aa)) constitute a Urease domain. Positions 136, 138, and 219 each coordinate Ni(2+). Lysine 219 carries the N6-carboxylysine modification. Residue histidine 221 coordinates substrate. Ni(2+)-binding residues include histidine 248 and histidine 274. Histidine 322 functions as the Proton donor in the catalytic mechanism. Residue aspartate 362 coordinates Ni(2+).

It belongs to the metallo-dependent hydrolases superfamily. Urease alpha subunit family. Heterotrimer of UreA (gamma), UreB (beta) and UreC (alpha) subunits. Three heterotrimers associate to form the active enzyme. Requires Ni cation as cofactor. In terms of processing, carboxylation allows a single lysine to coordinate two nickel ions.

Its subcellular location is the cytoplasm. The catalysed reaction is urea + 2 H2O + H(+) = hydrogencarbonate + 2 NH4(+). It functions in the pathway nitrogen metabolism; urea degradation; CO(2) and NH(3) from urea (urease route): step 1/1. The protein is Urease subunit alpha of Rhizobium etli (strain ATCC 51251 / DSM 11541 / JCM 21823 / NBRC 15573 / CFN 42).